Here is a 249-residue protein sequence, read N- to C-terminus: 5'-nucleotidase SurE (249 aa).

A divalent metal cation is bound by residues D8, D9, S39, and N91.

It belongs to the SurE nucleotidase family. A divalent metal cation serves as cofactor.

The protein localises to the cytoplasm. It carries out the reaction a ribonucleoside 5'-phosphate + H2O = a ribonucleoside + phosphate. Functionally, nucleotidase that shows phosphatase activity on nucleoside 5'-monophosphates. In Pseudomonas syringae pv. tomato (strain ATCC BAA-871 / DC3000), this protein is 5'-nucleotidase SurE.